Here is a 416-residue protein sequence, read N- to C-terminus: Enterobactin exporter EntS (416 aa).

Topologically, residues 1 to 21 (MNKQSWLLNLSLLKTHPAFRA) are cytoplasmic. Residues 22–42 (VFLARFISIVSLGLLGVAVPV) traverse the membrane as a helical segment. Residues 43–55 (QIQMMTHSTWQVG) are Periplasmic-facing. A helical membrane pass occupies residues 56 to 76 (LSVTLTGGAMFVGLMVGGVLA). Over 77-83 (DRYERKK) the chain is Cytoplasmic. Residues 84-104 (VILLARGTCGIGFIGLCLNAL) traverse the membrane as a helical segment. The Periplasmic segment spans residues 105-109 (LPEPS). A helical membrane pass occupies residues 110-130 (LLAIYLLGLWDGFFASLGVTA). Residues 131–156 (LLAATPALVGRENLMQAGALTMLTVR) are Cytoplasmic-facing. A helical membrane pass occupies residues 157 to 177 (LGSVISPMIGGLLLATGGVAW). Position 178 (asparagine 178) is a topological domain, periplasmic. Residues 179–199 (YGLAAAGTFITLLPLLSLPAL) traverse the membrane as a helical segment. At 200–218 (PPPPQPREHPLKSLLAGFR) the chain is on the cytoplasmic side. A helical transmembrane segment spans residues 219-239 (FLLASPLVGGIALLGGLLTMA). The Periplasmic portion of the chain corresponds to 240–256 (SAVRVLYPALADNWQMS). Residues 257 to 277 (AAEIGFLYAAIPLGAAIGALT) traverse the membrane as a helical segment. Residues 278–287 (SGKLAHSARP) lie on the Cytoplasmic side of the membrane. The helical transmembrane segment at 288–307 (GLLMLLSTLGSFLAIGLFGL) threads the bilayer. Topologically, residues 308 to 313 (MPMWIL) are periplasmic. Residues 314–336 (GVVCLALFGWLSAVSSLLQYTML) traverse the membrane as a helical segment. Over 337–356 (QTQTPEAMLGRINGLWTAQN) the chain is Cytoplasmic. The chain crosses the membrane as a helical span at residues 357-377 (VTGDAIGAALLGGLGAMMTPV). Position 378 (alanine 378) is a topological domain, periplasmic. A helical transmembrane segment spans residues 379-399 (SASASGFGLLIIGVLLLLVLV). Residues 400–416 (ELRRFRQTPPQVTASDS) lie on the Cytoplasmic side of the membrane.

This sequence belongs to the major facilitator superfamily. EntS (TC 2.A.1.38) family.

Its subcellular location is the cell inner membrane. Functionally, component of an export pathway for enterobactin. This is Enterobactin exporter EntS from Shigella boydii serotype 18 (strain CDC 3083-94 / BS512).